We begin with the raw amino-acid sequence, 479 residues long: Gamma-aminobutyric acid receptor subunit rho-1 (479 aa).

The N-terminal stretch at methionine 1 to alanine 21 is a signal peptide. At threonine 22 to histidine 280 the chain is on the extracellular side. Positions glutamate 32–lysine 55 are disordered. Residues glutamine 45–lysine 55 show a composition bias toward basic and acidic residues. Arginine 125 serves as a coordination point for 4-aminobutanoate. Asparagine 140 carries an N-linked (GlcNAc...) asparagine glycan. Serine 189 lines the 4-aminobutanoate pocket. Cysteine 198 and cysteine 212 form a disulfide bridge. Glutamate 217 contributes to the 4-aminobutanoate binding site. 2 N-linked (GlcNAc...) asparagine glycosylation sites follow: asparagine 234 and asparagine 274. Residues isoleucine 281 to valine 301 form a helical membrane-spanning segment. The Cytoplasmic portion of the chain corresponds to serine 302–arginine 313. A helical membrane pass occupies residues valine 314–serine 334. Over methionine 335 to aspartate 345 the chain is Extracellular. Residues isoleucine 346–asparagine 366 form a helical membrane-spanning segment. The Cytoplasmic segment spans residues tyrosine 367 to lysine 457. A helical membrane pass occupies residues tyrosine 458–phenylalanine 478. Position 479 (serine 479) is a topological domain, extracellular.

It belongs to the ligand-gated ion channel (TC 1.A.9) family. Gamma-aminobutyric acid receptor (TC 1.A.9.5) subfamily. GABRR1 sub-subfamily. Three rho subunits (rho-1/GBRR1, rho-2/GBRR2 and rho-3/GBRR3) coassemble either to form functional homopentamers or heteropentamers. Rho-1/GBRR1 subunits can also associate with alpha-1/GBRA1 subunits to form a functional GABAAR. Interacts with SQSTM1. As to expression, highly expressed in the retina. Expressed in a lesser extent in brain, lung and thymus.

It is found in the postsynaptic cell membrane. The protein localises to the cell membrane. The catalysed reaction is chloride(in) = chloride(out). Its activity is regulated as follows. Inhibited by TPMPA, a rho-specific antagonist, when forming a homopentamer. In contrast with other GABAARs, rho-1 GABAAR is not inhibited by bicuculline, when forming a homopentamer. Functionally, rho subunit of the pentameric ligand-gated chloride channels responsible for mediating the effects of gamma-aminobutyric acid (GABA), the major inhibitory neurotransmitter in the brain. Rho-containing GABA-gated chloride channels are a subclass of GABA(A) receptors (GABAARs) entirely composed of rho subunits, where GABA molecules bind at the rho intersubunit interfaces. When activated by GABA, rho-GABAARs selectively allow the flow of chloride anions across the cell membrane down their electrochemical gradient. Rho-1 subunits are primarily expressed in retina where rho-1-containing GABAARs may play a role in retinal neurotransmission. Rho-1 GABAARs are also involved in neuronal tonic (extrasynaptic) and phasic (synaptic) transmission in the Purkinje neurons of the cerebellum. Rho-1 GABAARs may also contribute to the regulation of glial development in the cerebellum by controlling extrasynaptic transmission. This chain is Gamma-aminobutyric acid receptor subunit rho-1, found in Homo sapiens (Human).